Reading from the N-terminus, the 417-residue chain is MNAEIMAVGSELLLGQIANTNGQFISKQLASIGVDVYRHTVVGDNEDRLKIALQEAYERADLVILTGGLGPTKDDLTKETVAAFCGKRLVYDENALHEIEDYFKRHNRVMTPNNKKQAYVIEGCTVLANRHGMAPGMLCELEDGKKLALLPGPPSEMKPMFVNELLPKLLGATEQTEITSRVLHFFGIGESQLETDLLDLIATQTNPTIAPLAGDGEVKLRLTVKHADKNEAARLLDETETLIRKRVGSYLYGYNETTLVKETFLRLQASGLTIASAESLTAGLFSSELAAFAGASHVLKGSVTAYSNELKQQLLQVSSATLASDGAISEACALEMARGVKTLYGSDIAISFTGVAGPGVQEGHEAGTVFLALLLPGGKERVYTLSLSGGRNAVRMRAVKFGYFYLLEELKRSNGSK.

Belongs to the CinA family.

This is Putative competence-damage inducible protein from Shouchella clausii (strain KSM-K16) (Alkalihalobacillus clausii).